Consider the following 293-residue polypeptide: tRNA pseudouridine synthase B (293 aa).

Asp-39 acts as the Nucleophile in catalysis.

It belongs to the pseudouridine synthase TruB family. Type 1 subfamily.

It carries out the reaction uridine(55) in tRNA = pseudouridine(55) in tRNA. Responsible for synthesis of pseudouridine from uracil-55 in the psi GC loop of transfer RNAs. This Streptococcus thermophilus (strain ATCC BAA-250 / LMG 18311) protein is tRNA pseudouridine synthase B.